We begin with the raw amino-acid sequence, 425 residues long: Polyadenylate-binding protein RBP47B' (425 aa).

3 consecutive RRM domains span residues 24–102 (RTLW…LNWA), 116–195 (HSIF…AATP), and 237–309 (TTIS…WSKN).

Belongs to the polyadenylate-binding RBP47 family. As to quaternary structure, interacts with the poly(A) tail of mRNA in nucleus.

Its subcellular location is the nucleus. The protein localises to the cytoplasmic granule. Functionally, heterogeneous nuclear ribonucleoprotein (hnRNP)-protein binding the poly(A) tail of mRNA and probably involved in some steps of pre-mRNA maturation. The sequence is that of Polyadenylate-binding protein RBP47B' (RBP47B') from Arabidopsis thaliana (Mouse-ear cress).